Consider the following 117-residue polypeptide: Crustacean hyperglycemic hormones 3 (117 aa).

The N-terminal stretch at 1–24 is a signal peptide; sequence MVTPRMLSALSAVLLLVLTASSSA. Cystine bridges form between Cys50–Cys86, Cys66–Cys82, and Cys69–Cys95. Val115 is subject to Valine amide.

The protein belongs to the arthropod CHH/MIH/GIH/VIH hormone family. Produced by the medulla terminalis X-organ in the eyestalks and transported to the sinus gland where they are stored and released.

Its subcellular location is the secreted. In terms of biological role, hormone found in the sinus gland of isopods and decapods which controls the blood sugar level. Has a secretagogue action over the amylase released from the midgut gland. May act as a stress hormone and may be involved in the control of molting and reproduction. This is Crustacean hyperglycemic hormones 3 from Penaeus japonicus (Kuruma prawn).